The primary structure comprises 76 residues: UPF0270 protein PSPA7_1664 (76 aa).

It belongs to the UPF0270 family.

The chain is UPF0270 protein PSPA7_1664 from Pseudomonas paraeruginosa (strain DSM 24068 / PA7) (Pseudomonas aeruginosa (strain PA7)).